We begin with the raw amino-acid sequence, 807 residues long: MKARRNKKQVPSFRKLIKTSKVKLENKLKNKQFKQQSTIKKYRKEQRKLRQAVKDAVSKKPIPLEDPKSKRPVKRMEREEDEEEEALPLDMMDEDDLQLMKDLGQKASFLTRDLSSSEPVHIKKRKHESVIEKYEKVPRTLQTAPEKELIHLLPIKDKSGIIPQAREKPVTDVQQEEEAEEELEDEEEVIEDPRKELTIEEHVIERKKKLQDKKIQIAALASAILSDPESHIKKLKELRSMLMEQDPDVAVTVRKLVIISLMELFKDITPSYKIRPLTEAEKSTKIRKETQKLREFEEGLVSQYKFYLENLEQIVKDWKQRKLKKSNVVSLKAYKGLAEVAVKSLCELLVALPHFNFHNNIIVLIVPLMNDGSKPVSEMCCEAVKKLFKQDKLGQASLGVIKVISGFVKGRNYEVRPEMLKTFLCLRIKEVEVKKDTEDINKPKRFMTFKEKRKTLSRMQRKWKKAEEKLERELREAEASESTEKKLKLHTETLNIVFVTYFRILKKAQKSPLLPAVLEGLAKFAHLINVEFFDDLLVVLHTLIESGELSYQESLHCVQTAFHILSGQGDVLNIDPMKFYTHLYKTLFTLHAGATNDGIEIVLHCLDVMLSKRRKQVSHQRALAFIKRLCTLALQVLPNSSIGLLATTRILMHTFPRTDLLLDNESQGSGVFLPELEEPEYCNAQNTALWELHTLRRHYHPIVRRFAAHLLAGAPSEGSEALKPELSRRSAVELFETYSMAAMTFNPPVESSHSKRKDKFLPGDSFLNEDLNQLIKRYCNEAAPETPLDFAKCLESSSRQYRVNGLS.

2 disordered regions span residues 27–93 and 167–191; these read KLKN…DMMD and EKPV…EVIE. A compositionally biased stretch (basic residues) spans 40 to 51; it reads KKYRKEQRKLRQ. A compositionally biased stretch (basic and acidic residues) spans 52-78; the sequence is AVKDAVSKKPIPLEDPKSKRPVKRMER. Acidic residues-rich tracts occupy residues 79 to 93 and 174 to 190; these read EEDE…DMMD and QQEE…EEVI. A Glycyl lysine isopeptide (Lys-Gly) (interchain with G-Cter in SUMO2) cross-link involves residue K332. Residues 449 to 489 are a coiled coil; sequence FKEKRKTLSRMQRKWKKAEEKLERELREAEASESTEKKLKL.

This sequence belongs to the CBF/MAK21 family.

The protein resides in the nucleus. The protein localises to the nucleolus. It localises to the nucleus speckle. May be required for adipogenesis. The chain is Nucleolar complex protein 3 homolog (Noc3l) from Mus musculus (Mouse).